Reading from the N-terminus, the 904-residue chain is Translation initiation factor IF-2 (904 aa).

3 disordered regions span residues 102 to 122, 134 to 252, and 267 to 316; these read TYVK…PDEE, RQRN…MVAG, and HLSA…ERPT. Basic and acidic residues predominate over residues 134–177; sequence RQRNLEEQQRLAESDRVRDEAIQRKREEEQAAKDRAEAERKAAE. Over residues 178–230 the composition is skewed to low complexity; it reads EAAAAASAPAPVADAPKPSAAAPAARLPSSPSSAPRAARPAGASPASRPAAPA. The tr-type G domain occupies 403-572; it reads SRPPVVTIMG…SLQAEVLELK (170 aa). The segment at 412 to 419 is G1; sequence GHVDHGKT. 412 to 419 is a GTP binding site; sequence GHVDHGKT. The tract at residues 437 to 441 is G2; that stretch reads GITQH. A G3 region spans residues 458–461; sequence DTPG. Residues 458–462 and 512–515 contribute to the GTP site; these read DTPGH and NKID. Positions 512 to 515 are G4; that stretch reads NKID. Residues 548 to 550 are G5; the sequence is SAK.

It belongs to the TRAFAC class translation factor GTPase superfamily. Classic translation factor GTPase family. IF-2 subfamily.

It localises to the cytoplasm. One of the essential components for the initiation of protein synthesis. Protects formylmethionyl-tRNA from spontaneous hydrolysis and promotes its binding to the 30S ribosomal subunits. Also involved in the hydrolysis of GTP during the formation of the 70S ribosomal complex. This Xanthomonas axonopodis pv. citri (strain 306) protein is Translation initiation factor IF-2.